The primary structure comprises 669 residues: Protein fem-1 homolog A (669 aa).

7 ANK repeats span residues 2–31 (DLRT…REEL), 40–70 (GGGT…SVEA), 82–111 (EGAP…SVNR), 115–145 (TNST…DLEV), 149–178 (HGHT…QVNR), 182–211 (KGNT…RMER), and 214–243 (YGMT…GQEQ). Serine 108 bears the Phosphoserine mark. The interval 240–278 (GQEQVAGGEAQPGLPQEDPSTSQGCAQPQGAPCCSSSPE) is disordered. TPR repeat units lie at residues 298 to 332 (VEAL…RHQG) and 390 to 423 (SYYI…QQSN). 2 ANK repeats span residues 534 to 576 (NGFT…DPDS) and 580 to 609 (DNNT…HMDA).

It belongs to the fem-1 family. In terms of assembly, component of a CRL2 E3 ubiquitin-protein ligase complex, also named ECS (Elongin BC-CUL2/5-SOCS-box protein) complex, composed of CUL2, Elongin BC (ELOB and ELOC), RBX1 and substrate-specific adapter FEM1A. Interacts with PTGER4. Interacts with NFKB1; the interaction is direct. Phosphorylated; highly phosphorylated in myoblasts and myotubes. Phosphorylation at Ser-108 promotes PGE2-EP4-mediated inhibition of inflammation. Dephosphorylated by protein phosphatase 2A (PP2A). Present in macrophages derived from peripheral blood monocytes. Also present in atheromata (at protein level).

It localises to the mitochondrion. Its subcellular location is the cytoplasm. It participates in protein modification; protein ubiquitination. In terms of biological role, substrate-recognition component of a Cul2-RING (CRL2) E3 ubiquitin-protein ligase complex of the DesCEND (destruction via C-end degrons) pathway, which recognizes a C-degron located at the extreme C terminus of target proteins, leading to their ubiquitination and degradation. The C-degron recognized by the DesCEND pathway is usually a motif of less than ten residues and can be present in full-length proteins, truncated proteins or proteolytically cleaved forms. The CRL2(FEM1A) complex specifically recognizes proteins with an arginine at the C-terminus: recognizes and binds proteins ending with -Lys/Arg-Xaa-Arg and -Lys/Arg-Xaa-Xaa-Arg C-degrons, such as SIL1 or OR51B2, leading to their ubiquitination and degradation. Promotes ubiquitination and degradation of SLBP. Involved in PGE2-EP4-mediated inhibition of inflammation of macrophages via interaction with NFKB1 and PTGER4. Promotes inflammation in brain microglia through MAP2K4/MKK4-mediated signaling. The chain is Protein fem-1 homolog A from Homo sapiens (Human).